A 602-amino-acid polypeptide reads, in one-letter code: Myotubularin (602 aa).

The interval 1–40 (MASSSASDCDAHPVERESMRKVSQDGVRQDMSKSGPRLPG) is disordered. A compositionally biased stretch (basic and acidic residues) spans 9–31 (CDAHPVERESMRKVSQDGVRQDM). At Ser-18 the chain carries Phosphoserine. The GRAM domain maps to 28–97 (RQDMSKSGPR…GVISRIEKMG (70 aa)). In terms of domain architecture, Myotubularin phosphatase spans 163–538 (GWAIYNPVEE…RHLELWVNYY (376 aa)). Residues Asn-288, Asn-313, and Ile-314 each contribute to the a 1,2-diacyl-sn-glycero-3-phospho-(1D-myo-inositol-3,5-bisphosphate) site. Positions 288, 313, and 314 each coordinate a 1,2-diacyl-sn-glycero-3-phospho-(1D-myo-inositol-3-phosphate). Cys-375 serves as the catalytic Phosphocysteine intermediate. A 1,2-diacyl-sn-glycero-3-phospho-(1D-myo-inositol-3,5-bisphosphate) contacts are provided by Ser-376, Asp-377, Gly-378, Trp-379, Asp-380, Arg-381, Lys-417, and Arg-421. Residues Ser-376, Asp-377, Gly-378, Trp-379, Asp-380, and Arg-381 each contribute to the a 1,2-diacyl-sn-glycero-3-phospho-(1D-myo-inositol-3-phosphate) site. Residue Arg-421 coordinates a 1,2-diacyl-sn-glycero-3-phospho-(1D-myo-inositol-3-phosphate). Thr-495 is subject to Phosphothreonine. Positions 578–592 (PTKLTDSSTPPSGSA) are enriched in polar residues. Residues 578-602 (PTKLTDSSTPPSGSAQIAPRMQTHF) are disordered.

The protein belongs to the protein-tyrosine phosphatase family. Non-receptor class myotubularin subfamily. In terms of assembly, heterodimer with MTMR12. Interacts with KMT2A/MLL1 (via SET domain). Interacts with DES in skeletal muscle but not in cardiac muscle. Interacts with SPEG.

Its subcellular location is the cytoplasm. The protein localises to the cell membrane. It localises to the cell projection. It is found in the filopodium. The protein resides in the ruffle. Its subcellular location is the late endosome. The protein localises to the myofibril. It localises to the sarcomere. It carries out the reaction a 1,2-diacyl-sn-glycero-3-phospho-(1D-myo-inositol-3-phosphate) + H2O = a 1,2-diacyl-sn-glycero-3-phospho-(1D-myo-inositol) + phosphate. The catalysed reaction is a 1,2-diacyl-sn-glycero-3-phospho-(1D-myo-inositol-3,5-bisphosphate) + H2O = a 1,2-diacyl-sn-glycero-3-phospho-(1D-myo-inositol-5-phosphate) + phosphate. The enzyme catalyses 1,2-dioctanoyl-sn-glycero-3-phospho-(1-D-myo-inositol-3-phosphate) + H2O = 1,2-dioctanoyl-sn-glycero-3-phospho-(1D-myo-inositol) + phosphate. It catalyses the reaction 1,2-dioctanoyl-sn-glycero-3-phospho-(1D-myo-inositol-3,5-bisphosphate) + H2O = 1,2-dioctanoyl-sn-glycero-3-phospho-(1D-myo-inositol-5-phosphate) + phosphate. It carries out the reaction 1,2-dihexadecanoyl-sn-glycero-3-phospho-(1D-myo-inositol-3,5-phosphate) + H2O = 1,2-dihexadecanoyl-sn-glycero-3-phospho-(1D-myo-inositol-5-phosphate) + phosphate. Its activity is regulated as follows. Allosterically activated by phosphatidylinositol 5-phosphate (PI5P). Lipid phosphatase which dephosphorylates phosphatidylinositol 3-monophosphate (PI3P) and phosphatidylinositol 3,5-bisphosphate (PI(3,5)P2). Has also been shown to dephosphorylate phosphotyrosine- and phosphoserine-containing peptides. Negatively regulates EGFR degradation through regulation of EGFR trafficking from the late endosome to the lysosome. Plays a role in vacuolar formation and morphology. Regulates desmin intermediate filament assembly and architecture. Plays a role in mitochondrial morphology and positioning. Required for skeletal muscle maintenance but not for myogenesis. In skeletal muscles, stabilizes MTMR12 protein levels. This is Myotubularin from Rattus norvegicus (Rat).